We begin with the raw amino-acid sequence, 369 residues long: Ribosomal RNA large subunit methyltransferase M (369 aa).

S-adenosyl-L-methionine contacts are provided by residues serine 198, 231-234, aspartate 250, aspartate 270, and aspartate 287; that span reads APGG. Catalysis depends on lysine 316, which acts as the Proton acceptor.

Belongs to the class I-like SAM-binding methyltransferase superfamily. RNA methyltransferase RlmE family. RlmM subfamily. In terms of assembly, monomer.

The protein localises to the cytoplasm. It carries out the reaction cytidine(2498) in 23S rRNA + S-adenosyl-L-methionine = 2'-O-methylcytidine(2498) in 23S rRNA + S-adenosyl-L-homocysteine + H(+). Catalyzes the 2'-O-methylation at nucleotide C2498 in 23S rRNA. This Idiomarina loihiensis (strain ATCC BAA-735 / DSM 15497 / L2-TR) protein is Ribosomal RNA large subunit methyltransferase M.